Here is a 413-residue protein sequence, read N- to C-terminus: Aspartate aminotransferase, cytoplasmic (413 aa).

Residues Gly-39 and Trp-141 each coordinate L-aspartate. Phosphoserine is present on Ser-149. Residue Asn-195 coordinates L-aspartate. The residue at position 259 (Lys-259) is an N6-(pyridoxal phosphate)lysine. Lys-318 carries the post-translational modification N6-succinyllysine. Arg-387 contacts L-aspartate.

This sequence belongs to the class-I pyridoxal-phosphate-dependent aminotransferase family. In terms of assembly, homodimer. Pyridoxal 5'-phosphate is required as a cofactor. Expressed in neurons of the retina. Localizes to the inner and outer plexiform layers, the inner and outer nuclear layer and the outer segments of photoreceptors.

The protein localises to the cytoplasm. It carries out the reaction L-aspartate + 2-oxoglutarate = oxaloacetate + L-glutamate. The catalysed reaction is L-cysteine + 2-oxoglutarate = 2-oxo-3-sulfanylpropanoate + L-glutamate. It catalyses the reaction (2S)-2-aminobutanoate + 2-oxoglutarate = 2-oxobutanoate + L-glutamate. The enzyme catalyses 3-sulfino-L-alanine + 2-oxoglutarate = 3-sulfinopyruvate + L-glutamate. With respect to regulation, inhibited by calcium ions. Functionally, biosynthesis of L-glutamate from L-aspartate or L-cysteine. Important regulator of levels of glutamate, the major excitatory neurotransmitter of the vertebrate central nervous system. Acts as a scavenger of glutamate in brain neuroprotection. The aspartate aminotransferase activity is involved in hepatic glucose synthesis during development and in adipocyte glyceroneogenesis. Using L-cysteine as substrate, regulates levels of mercaptopyruvate, an important source of hydrogen sulfide. Mercaptopyruvate is converted into H(2)S via the action of 3-mercaptopyruvate sulfurtransferase (3MST). Hydrogen sulfide is an important synaptic modulator and neuroprotectant in the brain. This chain is Aspartate aminotransferase, cytoplasmic, found in Mus musculus (Mouse).